We begin with the raw amino-acid sequence, 171 residues long: NADH-ubiquinone oxidoreductase chain 6 (171 aa).

The next 5 membrane-spanning stretches (helical) occupy residues 1-21 (MYVMFLLSILLVLGFVSISSK), 25-44 (IYGGVGLIVSGAVGCGIIMG), 49-71 (FMGLMVFLIYLGGMLVVFGYTTA), 85-105 (VVIWGVVLLGVGMELFMVAWM), and 150-170 (WFAAIAGWSLFISVLIVIEII).

It belongs to the complex I subunit 6 family. Core subunit of respiratory chain NADH dehydrogenase (Complex I) which is composed of 45 different subunits.

It is found in the mitochondrion inner membrane. It carries out the reaction a ubiquinone + NADH + 5 H(+)(in) = a ubiquinol + NAD(+) + 4 H(+)(out). Functionally, core subunit of the mitochondrial membrane respiratory chain NADH dehydrogenase (Complex I) which catalyzes electron transfer from NADH through the respiratory chain, using ubiquinone as an electron acceptor. Essential for the catalytic activity and assembly of complex I. This chain is NADH-ubiquinone oxidoreductase chain 6 (MT-ND6), found in Lemur catta (Ring-tailed lemur).